A 448-amino-acid polypeptide reads, in one-letter code: Asparagine--tRNA ligase (448 aa).

This sequence belongs to the class-II aminoacyl-tRNA synthetase family. Homodimer.

The protein localises to the cytoplasm. The catalysed reaction is tRNA(Asn) + L-asparagine + ATP = L-asparaginyl-tRNA(Asn) + AMP + diphosphate + H(+). This Streptococcus suis (strain 98HAH33) protein is Asparagine--tRNA ligase.